The sequence spans 371 residues: Opsin Rh1 (371 aa).

Residues 1-47 (MERYSTPLIGPSFAALTNGSVTDKVTPDMAHLVHPYWNQFPAMEPKW) are Extracellular-facing. A glycan (N-linked (GlcNAc...) asparagine) is linked at N18. The chain crosses the membrane as a helical span at residues 48–72 (AKFLAAYMVLIATISWCGNGVVIYI). Residues 73-84 (FSTTKSLRTPAN) are Cytoplasmic-facing. Residues 85 to 110 (LLVINLAISDFGIMITNTPMMGINLF) traverse the membrane as a helical segment. Residues 111-124 (YETWVLGPLMCDIY) are Extracellular-facing. C121 and C198 are joined by a disulfide. Residues 125 to 144 (GGLGSAFGCSSILSMCMISL) traverse the membrane as a helical segment. Over 145–163 (DRYNVIVKGMAGQPMTIKL) the chain is Cytoplasmic. A helical transmembrane segment spans residues 164-187 (AIMKIALIWFMASIWTLAPVFGWS). Topologically, residues 188 to 211 (RYVPEGNLTSCGIDYLERDWNPRS) are extracellular. The helical transmembrane segment at 212–239 (YLIFYSIFVYYLPLFLICYSYWFIIAAV) threads the bilayer. The Cytoplasmic segment spans residues 240–274 (SAHEKAMREQAKKMNVKSLRSSEDADKSAEGKLAK). The chain crosses the membrane as a helical span at residues 275–298 (VALVTISLWFMAWTPYTIINTLGL). The Extracellular segment spans residues 299 to 305 (FKYEGLT). Residues 306–330 (PLNTIWGACFAKSAACYNPIVYGIS) traverse the membrane as a helical segment. K317 bears the N6-(retinylidene)lysine mark. Residues 331-371 (HPKYGIALKEKCPCCVFGKVDDGKASDATSQATNNESETKA) are Cytoplasmic-facing.

This sequence belongs to the G-protein coupled receptor 1 family. Opsin subfamily. Phosphorylated on some or all of the serine and threonine residues present in the C-terminal region.

The protein localises to the cell projection. It is found in the rhabdomere membrane. Its function is as follows. Visual pigments are the light-absorbing molecules that mediate vision. They consist of an apoprotein, opsin, covalently linked to cis-retinal. This chain is Opsin Rh1 (NINAE), found in Calliphora vicina (Blue blowfly).